We begin with the raw amino-acid sequence, 211 residues long: MPDSINNGHKESHDHRISNDAEMITDEKWQAIINNDAAYNNQFFYAVKSTGIFCKPSCKSRVPKKENVCIFPNTEQALRANFRPCKRCKPTNEKMPDSEWVDLITEYIDKNFTEKLTLESLADICHGSPYHMHRTFKKIKGITLVEYIQQVRVHAAKKYLIQTNKAIGDIAICVGIANAPYFITLFKKKTGQTPARFRQMSKMEETYNGNK.

Cysteine 54 (nucleophile; methyl group acceptor from methylphosphotriester) is an active-site residue. 4 residues coordinate Zn(2+): cysteine 54, cysteine 58, cysteine 85, and cysteine 88. In terms of domain architecture, HTH araC/xylS-type spans 102–200; it reads DLITEYIDKN…GQTPARFRQM (99 aa). The H-T-H motif DNA-binding region spans 119-140; that stretch reads ESLADICHGSPYHMHRTFKKIK.

The cofactor is Zn(2+).

It carries out the reaction (2'-deoxyribonucleoside 5'-methylphosphotriester)-DNA + L-cysteinyl-[protein] = 2'-deoxyribonucleotide-DNA + S-methyl-L-cysteinyl-[protein] + H(+). Functionally, is involved in the adaptive response to alkylation damage in DNA caused by alkylating agents. Repairs the methylphosphotriester lesions in DNA by a direct and irreversible transfer of the methyl group to one of its own cysteine residues. Its function is as follows. The methylation of AdaA by methylphosphotriesters in DNA leads to its activation as a transcriptional regulator that activates the transcription of the ada operon which consists of adaA and adaB, and of the adjacent gene alkA. The protein is Bifunctional transcriptional activator/DNA repair enzyme AdaA (adaA) of Bacillus subtilis (strain 168).